Here is a 406-residue protein sequence, read N- to C-terminus: Cysteine desulfurase (406 aa).

N6-(pyridoxal phosphate)lysine is present on K226. The Cysteine persulfide intermediate role is filled by C364.

This sequence belongs to the class-V pyridoxal-phosphate-dependent aminotransferase family. Csd subfamily. Homodimer. Interacts with SufE and the SufBCD complex composed of SufB, SufC and SufD. The interaction with SufE is required to mediate the direct transfer of the sulfur atom from the S-sulfanylcysteine. Pyridoxal 5'-phosphate is required as a cofactor.

It is found in the cytoplasm. The enzyme catalyses (sulfur carrier)-H + L-cysteine = (sulfur carrier)-SH + L-alanine. The catalysed reaction is L-selenocysteine + AH2 = hydrogenselenide + L-alanine + A + H(+). It participates in cofactor biosynthesis; iron-sulfur cluster biosynthesis. Cysteine desulfurases mobilize the sulfur from L-cysteine to yield L-alanine, an essential step in sulfur metabolism for biosynthesis of a variety of sulfur-containing biomolecules. Component of the suf operon, which is activated and required under specific conditions such as oxidative stress and iron limitation. Acts as a potent selenocysteine lyase in vitro, that mobilizes selenium from L-selenocysteine. Selenocysteine lyase activity is however unsure in vivo. This chain is Cysteine desulfurase, found in Escherichia coli (strain K12 / MC4100 / BW2952).